Reading from the N-terminus, the 141-residue chain is Large ribosomal subunit protein uL11 (141 aa).

This sequence belongs to the universal ribosomal protein uL11 family. As to quaternary structure, part of the ribosomal stalk of the 50S ribosomal subunit. Interacts with L10 and the large rRNA to form the base of the stalk. L10 forms an elongated spine to which L12 dimers bind in a sequential fashion forming a multimeric L10(L12)X complex. In terms of processing, one or more lysine residues are methylated.

Its function is as follows. Forms part of the ribosomal stalk which helps the ribosome interact with GTP-bound translation factors. The polypeptide is Large ribosomal subunit protein uL11 (Limosilactobacillus reuteri (strain DSM 20016) (Lactobacillus reuteri)).